We begin with the raw amino-acid sequence, 94 residues long: Immune protein Tsi6 (94 aa).

Its function is as follows. Immunity protein that plays a role in preventing early activation of toxin Tse6. The chain is Immune protein Tsi6 from Pseudomonas aeruginosa (strain ATCC 15692 / DSM 22644 / CIP 104116 / JCM 14847 / LMG 12228 / 1C / PRS 101 / PAO1).